A 558-amino-acid polypeptide reads, in one-letter code: Glutamine--tRNA ligase (558 aa).

The 'HIGH' region signature appears at 36-46; it reads PEPNGYLHIGH. ATP is bound by residues 37 to 39 and 43 to 49; these read EPN and HIGHAKS. L-glutamine contacts are provided by Asp-69 and Tyr-214. ATP is bound by residues Thr-233, 263–264, and 271–273; these read RL and LSK. The 'KMSKS' region motif lies at 270–274; the sequence is LLSKR.

This sequence belongs to the class-I aminoacyl-tRNA synthetase family. Monomer.

The protein resides in the cytoplasm. The catalysed reaction is tRNA(Gln) + L-glutamine + ATP = L-glutaminyl-tRNA(Gln) + AMP + diphosphate. This Bradyrhizobium diazoefficiens (strain JCM 10833 / BCRC 13528 / IAM 13628 / NBRC 14792 / USDA 110) protein is Glutamine--tRNA ligase.